Reading from the N-terminus, the 173-residue chain is Endoribonuclease YbeY (173 aa).

The Zn(2+) site is built by His120, His124, and His130.

The protein belongs to the endoribonuclease YbeY family. Zn(2+) is required as a cofactor.

It localises to the cytoplasm. Its function is as follows. Single strand-specific metallo-endoribonuclease involved in late-stage 70S ribosome quality control and in maturation of the 3' terminus of the 16S rRNA. The chain is Endoribonuclease YbeY from Kineococcus radiotolerans (strain ATCC BAA-149 / DSM 14245 / SRS30216).